We begin with the raw amino-acid sequence, 105 residues long: Heat shock protein HspQ (105 aa).

Belongs to the HspQ family.

The protein localises to the cytoplasm. Its function is as follows. Involved in the degradation of certain denaturated proteins, including DnaA, during heat shock stress. The sequence is that of Heat shock protein HspQ from Escherichia fergusonii (strain ATCC 35469 / DSM 13698 / CCUG 18766 / IAM 14443 / JCM 21226 / LMG 7866 / NBRC 102419 / NCTC 12128 / CDC 0568-73).